Reading from the N-terminus, the 280-residue chain is Phosphatidylserine decarboxylase proenzyme (280 aa).

Residues aspartate 88, histidine 144, and serine 247 each act as charge relay system; for autoendoproteolytic cleavage activity in the active site. Residue serine 247 is the Schiff-base intermediate with substrate; via pyruvic acid; for decarboxylase activity of the active site. Serine 247 bears the Pyruvic acid (Ser); by autocatalysis mark.

Belongs to the phosphatidylserine decarboxylase family. PSD-B subfamily. Prokaryotic type I sub-subfamily. Heterodimer of a large membrane-associated beta subunit and a small pyruvoyl-containing alpha subunit. Pyruvate serves as cofactor. Is synthesized initially as an inactive proenzyme. Formation of the active enzyme involves a self-maturation process in which the active site pyruvoyl group is generated from an internal serine residue via an autocatalytic post-translational modification. Two non-identical subunits are generated from the proenzyme in this reaction, and the pyruvate is formed at the N-terminus of the alpha chain, which is derived from the carboxyl end of the proenzyme. The autoendoproteolytic cleavage occurs by a canonical serine protease mechanism, in which the side chain hydroxyl group of the serine supplies its oxygen atom to form the C-terminus of the beta chain, while the remainder of the serine residue undergoes an oxidative deamination to produce ammonia and the pyruvoyl prosthetic group on the alpha chain. During this reaction, the Ser that is part of the protease active site of the proenzyme becomes the pyruvoyl prosthetic group, which constitutes an essential element of the active site of the mature decarboxylase.

Its subcellular location is the cell membrane. It catalyses the reaction a 1,2-diacyl-sn-glycero-3-phospho-L-serine + H(+) = a 1,2-diacyl-sn-glycero-3-phosphoethanolamine + CO2. The protein operates within phospholipid metabolism; phosphatidylethanolamine biosynthesis; phosphatidylethanolamine from CDP-diacylglycerol: step 2/2. Functionally, catalyzes the formation of phosphatidylethanolamine (PtdEtn) from phosphatidylserine (PtdSer). The sequence is that of Phosphatidylserine decarboxylase proenzyme from Xanthomonas euvesicatoria pv. vesicatoria (strain 85-10) (Xanthomonas campestris pv. vesicatoria).